The primary structure comprises 228 residues: Ribulose-phosphate 3-epimerase (228 aa).

Ser-9 contributes to the substrate binding site. A divalent metal cation contacts are provided by His-34, Asp-36, His-68, and Asp-177. The active-site Proton acceptor is the Asp-36. Substrate contacts are provided by residues His-68, 177-179 (DGG), and 199-200 (GS). Asp-177 functions as the Proton donor in the catalytic mechanism.

This sequence belongs to the ribulose-phosphate 3-epimerase family. A divalent metal cation serves as cofactor.

It catalyses the reaction D-ribulose 5-phosphate = D-xylulose 5-phosphate. It functions in the pathway carbohydrate degradation. Functionally, catalyzes the reversible epimerization of D-ribulose 5-phosphate to D-xylulose 5-phosphate. This is Ribulose-phosphate 3-epimerase from Buchnera aphidicola subsp. Acyrthosiphon pisum (strain APS) (Acyrthosiphon pisum symbiotic bacterium).